Here is a 338-residue protein sequence, read N- to C-terminus: Ketol-acid reductoisomerase (NADP(+)) (338 aa).

Residues 1-181 enclose the KARI N-terminal Rossmann domain; the sequence is MQVYYDKDCD…GGGRTGIIET (181 aa). Residues 24–27, arginine 47, serine 50, serine 52, and 82–85 contribute to the NADP(+) site; these read FGSQ and DEFQ. The active site involves histidine 107. Glycine 133 is a binding site for NADP(+). Residues 182–327 form the KARI C-terminal knotted domain; sequence TFRDECETDL…RKLRAMMPWI (146 aa). Positions 190, 194, 226, and 230 each coordinate Mg(2+). Serine 251 is a binding site for substrate.

This sequence belongs to the ketol-acid reductoisomerase family. The cofactor is Mg(2+).

It catalyses the reaction (2R)-2,3-dihydroxy-3-methylbutanoate + NADP(+) = (2S)-2-acetolactate + NADPH + H(+). The enzyme catalyses (2R,3R)-2,3-dihydroxy-3-methylpentanoate + NADP(+) = (S)-2-ethyl-2-hydroxy-3-oxobutanoate + NADPH + H(+). The protein operates within amino-acid biosynthesis; L-isoleucine biosynthesis; L-isoleucine from 2-oxobutanoate: step 2/4. Its pathway is amino-acid biosynthesis; L-valine biosynthesis; L-valine from pyruvate: step 2/4. Its function is as follows. Involved in the biosynthesis of branched-chain amino acids (BCAA). Catalyzes an alkyl-migration followed by a ketol-acid reduction of (S)-2-acetolactate (S2AL) to yield (R)-2,3-dihydroxy-isovalerate. In the isomerase reaction, S2AL is rearranged via a Mg-dependent methyl migration to produce 3-hydroxy-3-methyl-2-ketobutyrate (HMKB). In the reductase reaction, this 2-ketoacid undergoes a metal-dependent reduction by NADPH to yield (R)-2,3-dihydroxy-isovalerate. In Hydrogenovibrio crunogenus (strain DSM 25203 / XCL-2) (Thiomicrospira crunogena), this protein is Ketol-acid reductoisomerase (NADP(+)).